A 726-amino-acid chain; its full sequence is Beta-glucosidase cel3A (726 aa).

The first 20 residues, 1-20, serve as a signal peptide directing secretion; sequence MASRLVAGLQVLALAGTATA. Residues N223 and N592 are each glycosylated (N-linked (GlcNAc...) asparagine).

This sequence belongs to the glycosyl hydrolase 3 family.

Its subcellular location is the secreted. It carries out the reaction Hydrolysis of terminal, non-reducing beta-D-glucosyl residues with release of beta-D-glucose.. It functions in the pathway glycan metabolism; cellulose degradation. In terms of biological role, beta-glucosidases are one of a number of cellulolytic enzymes involved in the degradation of cellulosic biomass. Catalyzes the last step releasing glucose from the inhibitory cellobiose. Has a broad substrate specificity but preferentially hydrolyzes highly polymerized 1,3- and 1,4-beta-glucans. In Pyricularia oryzae (strain 70-15 / ATCC MYA-4617 / FGSC 8958) (Rice blast fungus), this protein is Beta-glucosidase cel3A.